Consider the following 394-residue polypeptide: NAD(P)H-quinone oxidoreductase subunit H (394 aa).

Belongs to the complex I 49 kDa subunit family. NDH-1 can be composed of about 15 different subunits; different subcomplexes with different compositions have been identified which probably have different functions.

Its subcellular location is the cellular thylakoid membrane. It catalyses the reaction a plastoquinone + NADH + (n+1) H(+)(in) = a plastoquinol + NAD(+) + n H(+)(out). The catalysed reaction is a plastoquinone + NADPH + (n+1) H(+)(in) = a plastoquinol + NADP(+) + n H(+)(out). Its function is as follows. NDH-1 shuttles electrons from an unknown electron donor, via FMN and iron-sulfur (Fe-S) centers, to quinones in the respiratory and/or the photosynthetic chain. The immediate electron acceptor for the enzyme in this species is believed to be plastoquinone. Couples the redox reaction to proton translocation, and thus conserves the redox energy in a proton gradient. Cyanobacterial NDH-1 also plays a role in inorganic carbon-concentration. The sequence is that of NAD(P)H-quinone oxidoreductase subunit H from Nostoc punctiforme (strain ATCC 29133 / PCC 73102).